A 982-amino-acid chain; its full sequence is MSSKMVISEPGLNWDISPKNGLKTFFSRENYKDHSMAPSLKELRVLSNRRIGENLNASASSVENEPAVSSATQAKEKVKTTIGMVLLPKPRVPYPRFSRFSQREQRSYVDLLVKYAKIPANSKAVGINKNDYLQYLDMKKHVNEEVTEFLKFLQNSAKKCAQDYNMLSDDARLFTEKILRACIEQVKKYSEFYTLHEVTSLMGFFPFRVEMGLKLEKTLLALGSVKYVKTVFPSMPIKLQLSKDDIATIETSEQTAEAMHYDISKDPNAEKLVSRYHPQIALTSQSLFTLLNNHGPTYKEQWEIPVCIQVIPVAGSKPVKVIYINSPLPQKKMTMRERNQIFHEVPLKFMMSKNTSVPVSAVFMDKPEEFISEMDMSCEVNECRKIESLENLYLDFDDDVTELETFGVTTTKVSKSPSPASTSTVPNMTDAPTAPKAGTTTVAPSAPDISANSRSLSQILMEQLQKEKQLVTGMDGGPEECKNKDDQGFESCEKVSNSDKPLIQDSDLKTSDALQLENSQEIETSNKNDMTIDILHADGERPNVLENLDNSKEKTVGSEAAKTEDTVLCSSDTDEECLIIDTECKNNSDGKTAVVGSNLSSRPASPNSSSGQASVGNQTNTACSPEESCVLKKPIKRVYKKFDPVGEILKMQDELLKPISRKVPELPLMNLENSKQPSVSEQLSGPSDSSSWPKSGWPSAFQKPKGRLPYELQDYVEDTSEYLAPQEGNFVYKLFSLQDLLLLVRCSVQRIETRPRSKKRKKIRRQFPVYVLPKVEYQACYGVEALTESELCRLWTESLLHSNSSFYVGHIDAFTSKLFLLEEITSEELKEKLSALKISNLFNILQHILKKLSSLQEGSYLLSHAAEDSSLLIYKASDGKVTRTAYNLYKTHCGLPGVPSSLSVPWVPLDPSLLLPYHIHHGRIPCTFPPKSLDTTTQQKIGGTRMPTRSHRNPVSMETKSSCLPAQQVETEGVAPHKRKIT.

2 positions are modified to phosphoserine: Ser17 and Ser326. Residues 410–427 (TTKVSKSPSPASTSTVPN) show a composition bias toward polar residues. Disordered stretches follow at residues 410 to 450 (TTKV…PDIS) and 473 to 504 (GMDG…PLIQ). Residues 479–497 (EECKNKDDQGFESCEKVSN) are compositionally biased toward basic and acidic residues. Ser571 is subject to Phosphoserine. Thr573 bears the Phosphothreonine mark. Disordered regions lie at residues 595 to 623 (VGSN…NTAC), 672 to 697 (ENSK…KSGW), and 930 to 982 (PKSL…RKIT). Low complexity predominate over residues 597–610 (SNLSSRPASPNSSS). 2 stretches are compositionally biased toward polar residues: residues 611 to 623 (GQAS…NTAC) and 672 to 683 (ENSKQPSVSEQL). Positions 684–697 (SGPSDSSSWPKSGW) are enriched in low complexity. Positions 956–970 (SMETKSSCLPAQQVE) are enriched in polar residues.

It belongs to the ICE2 family. As to quaternary structure, component of the little elongation complex (LEC), at least composed of ELL (ELL, ELL2 or ELL3), ZC3H8, ICE1 and ICE2. Interacts with ICE1 (via C-terminus domain). Interacts with ELL. As to expression, expressed at low levels in lung and testis.

It is found in the nucleus. In terms of biological role, component of the little elongation complex (LEC), a complex required to regulate small nuclear RNA (snRNA) gene transcription by RNA polymerase II and III. This Homo sapiens (Human) protein is Little elongation complex subunit 2 (ICE2).